Consider the following 63-residue polypeptide: Bowman-Birk type proteinase inhibitor (63 aa).

7 disulfides stabilise this stretch: Cys8–Cys61, Cys9–Cys24, Cys12–Cys57, Cys14–Cys22, Cys31–Cys38, Cys35–Cys50, and Cys40–Cys48.

Belongs to the Bowman-Birk serine protease inhibitor family.

This inhibitor has two domains, each with separate antiprotease activity. Inhibits bovine trypsin and chymotrypsin, in a molar ratio of 1:1. The trypsin inhibition of FBI is independent of chymotrypsin inhibition, but the chymotrypsin inhibition is not completely independent of trypsin inhibition. The sequence is that of Bowman-Birk type proteinase inhibitor from Vicia faba (Broad bean).